Consider the following 257-residue polypeptide: MTLTNPSALVNQLVDFLRQELAQRGFKKVVVGLSGGVDSAVVARLCQEAIGENLHALLMPSSVSSKESVEHALLLCERFNLSHHIQSIAPLELAFRELHPEATPLRIGNACARFRMITLYDFSFKENRLVIGTGNKSEILLGYGTLYGDTACALNPIGDLYKTEIFQLAKFLSIPDEIIQKAPSADLFEGQSDEKELGFSYNDMDQLLFDHIELKLSKEELLAKGHAKELVEMVLKRISTNKFKSEMPPIAQVRGRL.

Position 32–39 (32–39 (GLSGGVDS)) interacts with ATP. Residue Asp38 participates in Mg(2+) binding. Deamido-NAD(+) is bound at residue Arg113. Thr133 is a binding site for ATP. Glu138 lines the Mg(2+) pocket. Lys162 and Ser184 together coordinate ATP.

The protein belongs to the NAD synthetase family. In terms of assembly, homodimer.

The catalysed reaction is deamido-NAD(+) + NH4(+) + ATP = AMP + diphosphate + NAD(+) + H(+). Its pathway is cofactor biosynthesis; NAD(+) biosynthesis; NAD(+) from deamido-NAD(+) (ammonia route): step 1/1. Its function is as follows. Catalyzes the ATP-dependent amidation of deamido-NAD to form NAD. Uses ammonia as a nitrogen source. This Wolinella succinogenes (strain ATCC 29543 / DSM 1740 / CCUG 13145 / JCM 31913 / LMG 7466 / NCTC 11488 / FDC 602W) (Vibrio succinogenes) protein is NH(3)-dependent NAD(+) synthetase.